The following is a 54-amino-acid chain: Ovomucoid (54 aa).

The region spanning 4–54 (VDCSDYPTHGCTLELKPICGSDNQTYSNKCGFCNAVAQSNGTLTLSHFGKC) is the Kazal-like domain. Cystine bridges form between cysteine 6/cysteine 36, cysteine 14/cysteine 33, and cysteine 22/cysteine 54. A glycan (N-linked (GlcNAc...) asparagine) is linked at asparagine 43.

It localises to the secreted. This Aepypodius arfakianus (Wattled brush turkey) protein is Ovomucoid.